The primary structure comprises 306 residues: NADH-cytochrome b5 reductase 2-B (306 aa).

A helical transmembrane segment spans residues 12–32; that stretch reads PLLLSSGIAVTAAAAVYFSTG. The FAD-binding FR-type domain maps to 53–157; that stretch reads STWVDLPLVK…TGPIVKYEWK (105 aa). 160–195 is a binding site for FAD; that stretch reads KFDSVTLLGAGSGITPLYQLMGSILSNPEDKTKINL.

The protein belongs to the flavoprotein pyridine nucleotide cytochrome reductase family. It depends on FAD as a cofactor.

It is found in the mitochondrion outer membrane. The catalysed reaction is 2 Fe(III)-[cytochrome b5] + NADH = 2 Fe(II)-[cytochrome b5] + NAD(+) + H(+). Functionally, may mediate the reduction of outer membrane cytochrome b5. This chain is NADH-cytochrome b5 reductase 2-B (MCR1B), found in Vanderwaltozyma polyspora (strain ATCC 22028 / DSM 70294 / BCRC 21397 / CBS 2163 / NBRC 10782 / NRRL Y-8283 / UCD 57-17) (Kluyveromyces polysporus).